Consider the following 185-residue polypeptide: Ribosome-recycling factor (185 aa).

Belongs to the RRF family.

It localises to the cytoplasm. Responsible for the release of ribosomes from messenger RNA at the termination of protein biosynthesis. May increase the efficiency of translation by recycling ribosomes from one round of translation to another. This is Ribosome-recycling factor from Hamiltonella defensa subsp. Acyrthosiphon pisum (strain 5AT).